We begin with the raw amino-acid sequence, 599 residues long: Elongation factor 4 (599 aa).

In terms of domain architecture, tr-type G spans 4–186; that stretch reads EHIRNFSIIA…EIVKKIPPPK (183 aa). Residues 16 to 21 and 133 to 136 contribute to the GTP site; these read DHGKST and NKID.

The protein belongs to the TRAFAC class translation factor GTPase superfamily. Classic translation factor GTPase family. LepA subfamily.

Its subcellular location is the cell inner membrane. The enzyme catalyses GTP + H2O = GDP + phosphate + H(+). Functionally, required for accurate and efficient protein synthesis under certain stress conditions. May act as a fidelity factor of the translation reaction, by catalyzing a one-codon backward translocation of tRNAs on improperly translocated ribosomes. Back-translocation proceeds from a post-translocation (POST) complex to a pre-translocation (PRE) complex, thus giving elongation factor G a second chance to translocate the tRNAs correctly. Binds to ribosomes in a GTP-dependent manner. The protein is Elongation factor 4 of Citrifermentans bemidjiense (strain ATCC BAA-1014 / DSM 16622 / JCM 12645 / Bem) (Geobacter bemidjiensis).